Reading from the N-terminus, the 72-residue chain is MKLTCVVIVAVLLLTACQLITADDSRGTQEHRALRSDTKLSMLTLRCESYGKPCGIYNDCCNACDPAKKTCT.

The N-terminal stretch at 1–22 is a signal peptide; it reads MKLTCVVIVAVLLLTACQLITA. Residues 23 to 46 constitute a propeptide that is removed on maturation; the sequence is DDSRGTQEHRALRSDTKLSMLTLR. Disulfide bonds link Cys-47–Cys-61, Cys-54–Cys-64, and Cys-60–Cys-71.

It belongs to the conotoxin O1 superfamily. Expressed by the venom duct.

The protein localises to the secreted. This Conus striatus (Striated cone) protein is Conotoxin 3.